The sequence spans 1022 residues: GPI ethanolamine phosphate transferase 1 (1022 aa).

Topologically, residues methionine 1–arginine 6 are cytoplasmic. Residues valine 7 to isoleucine 27 traverse the membrane as a helical segment. Topologically, residues tyrosine 28 to arginine 466 are lumenal. 2 N-linked (GlcNAc...) asparagine glycosylation sites follow: asparagine 148 and asparagine 433. The chain crosses the membrane as a helical span at residues threonine 467 to leucine 487. Topologically, residues histidine 488–arginine 498 are cytoplasmic. A helical membrane pass occupies residues threonine 499–tyrosine 519. At glutamine 520–serine 560 the chain is on the lumenal side. A helical transmembrane segment spans residues valine 561 to leucine 581. The Cytoplasmic portion of the chain corresponds to valine 582–aspartate 589. Residues isoleucine 590–leucine 610 form a helical membrane-spanning segment. Residues glycine 611–lysine 614 are Lumenal-facing. A helical membrane pass occupies residues leucine 615–alanine 635. Topologically, residues asparagine 636–aspartate 640 are cytoplasmic. A helical transmembrane segment spans residues methionine 641–phenylalanine 661. Over glutamate 662–threonine 685 the chain is Lumenal. Residues isoleucine 686–alanine 706 traverse the membrane as a helical segment. Residues serine 707–glycine 713 are Cytoplasmic-facing. Residues leucine 714–phenylalanine 734 traverse the membrane as a helical segment. The Lumenal segment spans residues leucine 735–methionine 749. 2 helical membrane passes run valine 750–phenylalanine 770 and tyrosine 771–histidine 791. At threonine 792–arginine 837 the chain is on the lumenal side. The N-linked (GlcNAc...) asparagine glycan is linked to asparagine 805. A helical membrane pass occupies residues valine 838–serine 858. Topologically, residues valine 859–glycine 880 are cytoplasmic. The chain crosses the membrane as a helical span at residues alanine 881–leucine 901. The Lumenal segment spans residues asparagine 902–serine 910. The chain crosses the membrane as a helical span at residues alanine 911–valine 931. Residues arginine 932–phenylalanine 947 lie on the Cytoplasmic side of the membrane. A helical transmembrane segment spans residues cysteine 948 to isoleucine 968. At serine 969 to serine 1022 the chain is on the lumenal side. Asparagine 989 carries an N-linked (GlcNAc...) asparagine glycan. The interval proline 998–serine 1022 is disordered.

Belongs to the PIGG/PIGN/PIGO family. PIGN subfamily.

Its subcellular location is the endoplasmic reticulum membrane. Its pathway is glycolipid biosynthesis; glycosylphosphatidylinositol-anchor biosynthesis. Its function is as follows. Ethanolamine phosphate transferase involved in glycosylphosphatidylinositol-anchor biosynthesis. Transfers ethanolamine phosphate to the first alpha-1,4-linked mannose of the glycosylphosphatidylinositol precursor of GPI-anchor. The polypeptide is GPI ethanolamine phosphate transferase 1 (mcd4) (Aspergillus oryzae (strain ATCC 42149 / RIB 40) (Yellow koji mold)).